The primary structure comprises 503 residues: Ferulic acid decarboxylase 1 (503 aa).

Positions 170, 193, and 236 each coordinate Mn(2+). Residues 170-175 (NWSIAR), 192-193 (QH), and E236 each bind prenylated FMN. Residue E285 is the Proton donor of the active site. K394 contributes to the prenylated FMN binding site.

This sequence belongs to the UbiD family. UbiD-like/FDC subfamily. Homodimer. May form higher order oligomers. The cofactor is Mn(2+). Prenylated FMN is required as a cofactor.

It localises to the cytoplasm. The enzyme catalyses (E)-4-coumarate + H(+) = 4-vinylphenol + CO2. It catalyses the reaction (E)-cinnamate + H(+) = styrene + CO2. The catalysed reaction is (E)-ferulate + H(+) = 2-methoxy-4-vinylphenol + CO2. Catalyzes the reversible decarboxylation of aromatic carboxylic acids like ferulic acid, p-coumaric acid or cinnamic acid, producing the corresponding vinyl derivatives 4-vinylphenol, 4-vinylguaiacol, and styrene, respectively, which play the role of aroma metabolites. Not essential for ubiquinone synthesis. This is Ferulic acid decarboxylase 1 from Saccharomyces cerevisiae (strain ATCC 204508 / S288c) (Baker's yeast).